A 490-amino-acid polypeptide reads, in one-letter code: ATP-dependent 6-phosphofructokinase (490 aa).

ATP is bound by residues G109, 175-176, and 200-203; these read RG and GDGT. Residue D201 participates in Mg(2+) binding. Residues 229–231, 274–276, E327, and 383–386 each bind substrate; these read TID, MGR, and YMIR. D231 acts as the Proton acceptor in catalysis. A Peroxisomal targeting signal motif is present at residues 488 to 490; that stretch reads SKL.

Belongs to the phosphofructokinase type A (PFKA) family. PPi-dependent PFK group II subfamily. Atypical ATP-dependent clade 'X' sub-subfamily. Homotetramer. It depends on Mg(2+) as a cofactor.

It localises to the glycosome. The catalysed reaction is beta-D-fructose 6-phosphate + ATP = beta-D-fructose 1,6-bisphosphate + ADP + H(+). Its pathway is carbohydrate degradation; glycolysis; D-glyceraldehyde 3-phosphate and glycerone phosphate from D-glucose: step 3/4. With respect to regulation, allosterically activated by AMP. In terms of biological role, catalyzes the phosphorylation of D-fructose 6-phosphate to fructose 1,6-bisphosphate by ATP, the first committing step of glycolysis. The chain is ATP-dependent 6-phosphofructokinase from Trypanoplasma borreli.